Reading from the N-terminus, the 142-residue chain is Large ribosomal subunit protein bL17 (142 aa).

This sequence belongs to the bacterial ribosomal protein bL17 family. In terms of assembly, part of the 50S ribosomal subunit. Contacts protein L32.

The protein is Large ribosomal subunit protein bL17 of Wolbachia pipientis wMel.